The primary structure comprises 152 residues: Lipoprotein signal peptidase (152 aa).

3 helical membrane passes run 33–53, 58–78, and 83–102; these read VVPP…FGLL, MLFV…YFKI, and PVLD…NLAD. Catalysis depends on residues D111 and D125. The helical transmembrane segment at 120–140 threads the bilayer; that stretch reads VFNLADTAIVTGAFLLAWALL.

It belongs to the peptidase A8 family.

Its subcellular location is the cell membrane. The enzyme catalyses Release of signal peptides from bacterial membrane prolipoproteins. Hydrolyzes -Xaa-Yaa-Zaa-|-(S,diacylglyceryl)Cys-, in which Xaa is hydrophobic (preferably Leu), and Yaa (Ala or Ser) and Zaa (Gly or Ala) have small, neutral side chains.. It participates in protein modification; lipoprotein biosynthesis (signal peptide cleavage). This protein specifically catalyzes the removal of signal peptides from prolipoproteins. In Pelotomaculum thermopropionicum (strain DSM 13744 / JCM 10971 / SI), this protein is Lipoprotein signal peptidase.